We begin with the raw amino-acid sequence, 217 residues long: Putative oxidative stress regulator AosR (217 aa).

The CXXXC signature appears at Cys-5–Cys-9. Cys-5 and Cys-9 are joined by a disulfide.

The protein belongs to the AosR family.

In Mycobacterium leprae (strain TN), this protein is Putative oxidative stress regulator AosR.